The chain runs to 285 residues: N(G),N(G)-dimethylarginine dimethylaminohydrolase 1 (285 aa).

A2 carries the post-translational modification N-acetylalanine. Residues L30, D73, E78, D79, R98, and R145 each coordinate substrate. H173 acts as the Proton donor in catalysis. An S-nitrosocysteine modification is found at C222. Substrate is bound at residue V268. C274 is modified (S-nitrosocysteine). The Nucleophile role is filled by C274. Position 274 (C274) interacts with Zn(2+).

In terms of assembly, monomer. Widely distributed, highest concentrations found in brain, brain cortex and kidney (at protein level).

The catalysed reaction is N(omega),N(omega)-dimethyl-L-arginine + H2O = dimethylamine + L-citrulline. It carries out the reaction N(omega)-methyl-L-arginine + H2O = L-citrulline + methylamine. Its activity is regulated as follows. Copurifies with a tightly bound zinc ion. Activated by release of zinc. His and other agents that promote the release of bound zinc ions activate the enzyme (in vitro). Inhibited by S-nitrosylation. Zinc protects the protein against S-nitrosylation. Functionally, hydrolyzes N(G),N(G)-dimethyl-L-arginine (ADMA) and N(G)-monomethyl-L-arginine (MMA) which act as inhibitors of NOS. Has therefore a role in the regulation of nitric oxide generation. In Bos taurus (Bovine), this protein is N(G),N(G)-dimethylarginine dimethylaminohydrolase 1 (DDAH1).